The following is a 491-amino-acid chain: Probable glycine dehydrogenase (decarboxylating) subunit 2 (491 aa).

Lys264 carries the N6-(pyridoxal phosphate)lysine modification.

The protein belongs to the GcvP family. C-terminal subunit subfamily. In terms of assembly, the glycine cleavage system is composed of four proteins: P, T, L and H. In this organism, the P 'protein' is a heterodimer of two subunits. Pyridoxal 5'-phosphate serves as cofactor.

The catalysed reaction is N(6)-[(R)-lipoyl]-L-lysyl-[glycine-cleavage complex H protein] + glycine + H(+) = N(6)-[(R)-S(8)-aminomethyldihydrolipoyl]-L-lysyl-[glycine-cleavage complex H protein] + CO2. Its function is as follows. The glycine cleavage system catalyzes the degradation of glycine. The P protein binds the alpha-amino group of glycine through its pyridoxal phosphate cofactor; CO(2) is released and the remaining methylamine moiety is then transferred to the lipoamide cofactor of the H protein. In Coxiella burnetii (strain Dugway 5J108-111), this protein is Probable glycine dehydrogenase (decarboxylating) subunit 2.